The sequence spans 154 residues: Transcription antitermination protein NusB (154 aa).

Belongs to the NusB family.

Its function is as follows. Involved in transcription antitermination. Required for transcription of ribosomal RNA (rRNA) genes. Binds specifically to the boxA antiterminator sequence of the ribosomal RNA (rrn) operons. This Methylobacillus flagellatus (strain ATCC 51484 / DSM 6875 / VKM B-1610 / KT) protein is Transcription antitermination protein NusB.